Here is a 732-residue protein sequence, read N- to C-terminus: Small conductance calcium-activated potassium channel protein 3 (732 aa).

The segment covering 1 to 11 (MDTSGHFHDSG) has biased composition (basic and acidic residues). Disordered stretches follow at residues 1 to 82 (MDTS…QQAP) and 119 to 161 (AILH…QASP). Over residues 35–61 (QPPPPPAPPAVPQQPPGPLLQPQPPQP) the composition is skewed to pro residues. Residues 62–82 (QQQQSQQQQQQQSQQQQQQAP) show a composition bias toward low complexity. A compositionally biased stretch (polar residues) spans 119 to 133 (AILHPSSRQGSQLNL). Low complexity predominate over residues 139 to 148 (GHSPSSTATS). Serine 168 bears the Phosphoserine mark. Residues 241–257 (THNHQHAGTTAGSTTFP) are compositionally biased toward polar residues. Residues 241-260 (THNHQHAGTTAGSTTFPKAN) form a disordered region. The chain crosses the membrane as a helical span at residues 289–309 (LIFGMFGIVVMVIETELSWGL). Residues 316–336 (FSLALKCLISLSTVILLGLII) form a helical membrane-spanning segment. Residues 367–387 (ISLEMLVCAIHPIPGEYKFFW) traverse the membrane as a helical segment. The helical transmembrane segment at 406-426 (IILSIPMFLRLYLIARVMLLH) threads the bilayer. A helical membrane pass occupies residues 455 to 475 (LMTICPGTVLLVFSISLWIIA). Residues 495-515 (FLGAMWLISITFLSIGYGDMV) constitute an intramembrane region (pore-forming). The chain crosses the membrane as a helical span at residues 524 to 544 (VCLLTGIMGAGCTALVVAVVA). Residues 562 to 638 (DTQLTKRIKN…LVDLSKMQNV (77 aa)) are calmodulin-binding. The stretch at 643-670 (ITELNDRSEDLEKQIGSLESKLEHLTAS) forms a coiled coil. The segment at 704-732 (GTSHAPPSDSPIGISSTSFPTPYTSSSSC) is disordered. Over residues 718-732 (SSTSFPTPYTSSSSC) the composition is skewed to low complexity.

Belongs to the potassium channel KCNN family. KCa2.3/KCNN3 subfamily. As to quaternary structure, homodimer. Heteromultimer with KCNN2 or KCNN1; this modulates plasma membrane expression and consequently the small conductance calcium-activated potassium channel activity. The complex is composed of 4 channel subunits each of which binds to a calmodulin subunit which regulates the channel activity through calcium-binding. Interacts with CALM1. Expressed at low levels in atrial and ventricular myocytes (at protein level).

It is found in the cell membrane. It localises to the cytoplasm. Its subcellular location is the myofibril. The protein resides in the sarcomere. The protein localises to the z line. It catalyses the reaction K(+)(in) = K(+)(out). With respect to regulation, inhibited by bee venom neurotoxin apamin. In terms of biological role, small conductance calcium-activated potassium channel that mediates the voltage-independent transmembrane transfer of potassium across the cell membrane through a constitutive interaction with calmodulin which binds the intracellular calcium allowing its opening. The current is characterized by a voltage-independent activation, an intracellular calcium concentration increase-dependent activation and a single-channel conductance of 10 picosiemens. Also presents an inwardly rectifying current, thus reducing its already small outward conductance of potassium ions, which is particularly the case when the membrane potential displays positive values, above + 20 mV. Activation is followed by membrane hyperpolarization. Thought to regulate neuronal excitability by contributing to the slow component of synaptic afterhyperpolarization. The polypeptide is Small conductance calcium-activated potassium channel protein 3 (Mus musculus (Mouse)).